The sequence spans 410 residues: ORC1-type DNA replication protein 2 (410 aa).

Residues Gly-60–Thr-65, Tyr-213, and Arg-225 contribute to the ATP site.

This sequence belongs to the CDC6/cdc18 family.

Functionally, involved in regulation of DNA replication. Binds DNA. This Aeropyrum pernix (strain ATCC 700893 / DSM 11879 / JCM 9820 / NBRC 100138 / K1) protein is ORC1-type DNA replication protein 2 (orc2).